The following is a 1270-amino-acid chain: Microtubule-associated tumor suppressor 1 (1270 aa).

Residues 1–14 (MTDDNSDDKIEDEL) show a composition bias toward acidic residues. 2 disordered regions span residues 1–50 (MTDD…NSAN) and 184–236 (FHTA…VTPS). Residues 38–50 (NSSASSVNWNSAN) are compositionally biased toward low complexity. Phosphothreonine is present on Thr186. The span at 197 to 211 (SGSTSSLSYSTWTSS) shows a compositional bias: low complexity. Residues 212–228 (HSDKTHARETTYDRESF) show a composition bias toward basic and acidic residues. 3 positions are modified to phosphoserine: Ser381, Ser399, and Ser443. 2 disordered regions span residues 524 to 560 (DAALSKVTPRPQQTSASSPSSVNSRQQTVLSRTPRSD) and 592 to 622 (THSKNASHRVPRTTSAVKSNQEDVDKASSSN). Polar residues predominate over residues 533–556 (RPQQTSASSPSSVNSRQQTVLSRT). Phosphoserine is present on Ser629. Polar residues-rich tracts occupy residues 701–710 (SKTTTTSGRN), 759–776 (VSSSGKPTSLKTAQSSWV), and 797–815 (TGSTPSIASTHSELSTYSN). Residues 701–815 (SKTTTTSGRN…THSELSTYSN (115 aa)) form a disordered region. The stretch at 940–1231 (IQHLLSEREE…RLSMENEELL (292 aa)) forms a coiled coil. Phosphoserine occurs at positions 1203, 1224, 1245, 1255, 1259, 1261, 1264, and 1268. Residues 1237–1270 (GDLCSPKRSPTSSAIPLQSPRNSGSFPSPSISPR) are disordered. Residues 1244–1270 (RSPTSSAIPLQSPRNSGSFPSPSISPR) show a composition bias toward polar residues.

This sequence belongs to the MTUS1 family. In terms of assembly, homodimer. Interacts with AGTR2. Interacts with PTPN6. Isoform 1 associates with microtubules. Ubiquitously expressed (at protein level). Highly expressed in brain. Down-regulated in ovarian carcinoma, pancreas carcinoma, colon carcinoma and head and neck squamous cell carcinoma (HNSCC). Isoform 1 is the major isoform in most peripheral tissues. Isoform 2 is abundant in most peripheral tissues. Isoform 3 is the major isoform in brain, female reproductive tissues, thyroid and heart. Within brain it is highly expressed in corpus callosum and pons. Isoform 6 is brain-specific, it is the major isoform in cerebellum and fetal brain.

It is found in the mitochondrion. The protein resides in the golgi apparatus. The protein localises to the cell membrane. Its subcellular location is the nucleus. It localises to the cytoplasm. It is found in the cytoskeleton. The protein resides in the microtubule organizing center. The protein localises to the centrosome. Its subcellular location is the spindle. Cooperates with AGTR2 to inhibit ERK2 activation and cell proliferation. May be required for AGTR2 cell surface expression. Together with PTPN6, induces UBE2V2 expression upon angiotensin-II stimulation. Isoform 1 inhibits breast cancer cell proliferation, delays the progression of mitosis by prolonging metaphase and reduces tumor growth. This chain is Microtubule-associated tumor suppressor 1 (MTUS1), found in Homo sapiens (Human).